A 552-amino-acid chain; its full sequence is N-acetylglucosamine-6-sulfatase (552 aa).

Positions 1-36 are cleaved as a signal peptide; that stretch reads MRLLPLAPGRLRRGSPRHLPSCSPALLLLVLGGCLG. Ca(2+)-binding residues include Asp-55, Asp-56, and Cys-91. Residue Cys-91 is the Nucleophile of the active site. The residue at position 91 (Cys-91) is a 3-oxoalanine (Cys). 7 N-linked (GlcNAc...) asparagine glycosylation sites follow: Asn-111, Asn-117, Asn-183, Asn-198, Asn-210, Asn-279, and Asn-317. Asp-326 and Asn-327 together coordinate Ca(2+). Asn-362, Asn-387, Asn-405, Asn-422, Asn-449, and Asn-480 each carry an N-linked (GlcNAc...) asparagine glycan. Phosphoserine is present on Ser-541.

The protein belongs to the sulfatase family. It depends on Ca(2+) as a cofactor. The form A (78 kDa) is processed by internal peptidase cleavage to a 32 kDa N-terminal species (form B) and a 48 kDa C-terminal species. In terms of processing, the conversion to 3-oxoalanine (also known as C-formylglycine, FGly), of a serine or cysteine residue in prokaryotes and of a cysteine residue in eukaryotes, is critical for catalytic activity.

The protein resides in the lysosome. It carries out the reaction Hydrolysis of the 6-sulfate groups of the N-acetyl-D-glucosamine 6-sulfate units of heparan sulfate and keratan sulfate.. Its function is as follows. Hydrolyzes 6-sulfate groups in N-acetyl-d-glucosaminide units of heparin sulfate and keratan sulfate. The polypeptide is N-acetylglucosamine-6-sulfatase (GNS) (Homo sapiens (Human)).